Reading from the N-terminus, the 207-residue chain is Glycerol-3-phosphate acyltransferase 1 (207 aa).

5 consecutive transmembrane segments (helical) span residues 3–23, 53–73, 85–105, 127–147, and 154–174; these read YVIA…QIVG, IVVA…LLIL, HIYI…PITM, IALI…YLAV, and ISFL…IVVG.

This sequence belongs to the PlsY family. Probably interacts with PlsX.

It localises to the cell membrane. It carries out the reaction an acyl phosphate + sn-glycerol 3-phosphate = a 1-acyl-sn-glycero-3-phosphate + phosphate. It functions in the pathway lipid metabolism; phospholipid metabolism. Its function is as follows. Catalyzes the transfer of an acyl group from acyl-phosphate (acyl-PO(4)) to glycerol-3-phosphate (G3P) to form lysophosphatidic acid (LPA). This enzyme utilizes acyl-phosphate as fatty acyl donor, but not acyl-CoA or acyl-ACP. The chain is Glycerol-3-phosphate acyltransferase 1 from Oceanobacillus iheyensis (strain DSM 14371 / CIP 107618 / JCM 11309 / KCTC 3954 / HTE831).